The primary structure comprises 267 residues: Hydroxyethylthiazole kinase (267 aa).

M48 provides a ligand contact to substrate. R124 and S170 together coordinate ATP. Substrate is bound at residue G197.

This sequence belongs to the Thz kinase family. Mg(2+) serves as cofactor.

It carries out the reaction 5-(2-hydroxyethyl)-4-methylthiazole + ATP = 4-methyl-5-(2-phosphooxyethyl)-thiazole + ADP + H(+). The protein operates within cofactor biosynthesis; thiamine diphosphate biosynthesis; 4-methyl-5-(2-phosphoethyl)-thiazole from 5-(2-hydroxyethyl)-4-methylthiazole: step 1/1. In terms of biological role, catalyzes the phosphorylation of the hydroxyl group of 4-methyl-5-beta-hydroxyethylthiazole (THZ). This Leptospira biflexa serovar Patoc (strain Patoc 1 / Ames) protein is Hydroxyethylthiazole kinase.